The primary structure comprises 343 residues: Allantoicase (343 aa).

It belongs to the allantoicase family.

It catalyses the reaction allantoate + H2O = (S)-ureidoglycolate + urea. Its pathway is nitrogen metabolism; (S)-allantoin degradation; (S)-ureidoglycolate from allantoate (aminidohydrolase route): step 1/1. In terms of biological role, utilization of purines as secondary nitrogen sources, when primary sources are limiting. This is Allantoicase (DAL2) from Saccharomyces cerevisiae (strain ATCC 204508 / S288c) (Baker's yeast).